We begin with the raw amino-acid sequence, 441 residues long: Enolase (441 aa).

Gln164 contributes to the (2R)-2-phosphoglycerate binding site. Glu206 acts as the Proton donor in catalysis. Residues Asp243, Glu289, and Asp316 each contribute to the Mg(2+) site. Residues Lys341, Arg370, Ser371, and Lys392 each contribute to the (2R)-2-phosphoglycerate site. Catalysis depends on Lys341, which acts as the Proton acceptor.

The protein belongs to the enolase family. It depends on Mg(2+) as a cofactor.

It is found in the cytoplasm. Its subcellular location is the secreted. It localises to the cell surface. The enzyme catalyses (2R)-2-phosphoglycerate = phosphoenolpyruvate + H2O. It participates in carbohydrate degradation; glycolysis; pyruvate from D-glyceraldehyde 3-phosphate: step 4/5. Catalyzes the reversible conversion of 2-phosphoglycerate (2-PG) into phosphoenolpyruvate (PEP). It is essential for the degradation of carbohydrates via glycolysis. The polypeptide is Enolase (Leuconostoc mesenteroides subsp. mesenteroides (strain ATCC 8293 / DSM 20343 / BCRC 11652 / CCM 1803 / JCM 6124 / NCDO 523 / NBRC 100496 / NCIMB 8023 / NCTC 12954 / NRRL B-1118 / 37Y)).